Here is a 78-residue protein sequence, read N- to C-terminus: Calcium/calmodulin-dependent protein kinase II inhibitor 1 (78 aa).

The segment at 41-68 (SKRPPKLGQIGRSKRVVIEDDRIDDVLK) is CAMK2 inhibitory domain.

This sequence belongs to the CAMK2N family. Interacts with CAMK2B; the presence of Ca(2+)/calmodulin increases the interaction but is not essential. Interacts with CAMK2A; this interaction requires CAMK2A activation by Ca(2+). In terms of tissue distribution, expressed in the brain (at protein level). Expressed in cardiomyocytes but not cardiac fibroblasts (at protein level).

It localises to the synapse. Its subcellular location is the cell projection. The protein resides in the dendrite. It is found in the postsynaptic density. In terms of biological role, potent and specific inhibitor of CaM-kinase II (CAMK2). Plays a role in the maintenance of long-term retrieval-induced memory in response to contextual fear. Modulates blood pressure and vascular reactivity via regulation of CAMK2 activity in addition to regulation of left ventricular mass. Mediates the NLRP3 inflammasome in cardiomyocytes via acting as an inhibitor of the MAPK14/p38 and MAPK8/JNK pathways, thereby regulating ventricular remodeling and cardiac rhythm post-myocardial infarction. Negatively effects insulin sensitivity and promotes lipid formation in adipose tissues independent of CAMK2 signaling. This chain is Calcium/calmodulin-dependent protein kinase II inhibitor 1 (Camk2n1), found in Mus musculus (Mouse).